We begin with the raw amino-acid sequence, 168 residues long: CASP-like protein UU-1 (168 aa).

The Cytoplasmic portion of the chain corresponds to 1 to 17 (MVELESQEAVTVASTAD). Residues 18-38 (IAVDVSLRLLAAATSLAAAVV) traverse the membrane as a helical segment. The Extracellular segment spans residues 39 to 54 (VAANHQQRWGIRVDFT). A helical transmembrane segment spans residues 55–75 (LFQVWIGFVAVNLVCTVYAAA). Residues 76–95 (TAAAAARKAMGRWWLHHADA) lie on the Cytoplasmic side of the membrane. The helical transmembrane segment at 96–116 (VVVNLEAAATAGAGAIGSIAM) threads the bilayer. Topologically, residues 117–136 (WGNEASGWYAVCRLYRRYCN) are extracellular. The chain crosses the membrane as a helical span at residues 137-157 (AGAAALALSLAAVLLLGVACA). Residues 158 to 168 (RSRYPKMPPTT) lie on the Cytoplasmic side of the membrane.

Belongs to the Casparian strip membrane proteins (CASP) family. As to quaternary structure, homodimer and heterodimers.

It is found in the cell membrane. In Oryza sativa subsp. japonica (Rice), this protein is CASP-like protein UU-1.